The primary structure comprises 804 residues: Elongation factor G, mitochondrial (804 aa).

Residues 1–63 (MSMHRVARAV…RHFFQSPIIR (63 aa)) constitute a mitochondrion transit peptide. One can recognise a tr-type G domain in the interval 99–385 (RRVRNIGIAA…AVCDYLPNPA (287 aa)). GTP contacts are provided by residues 108–115 (AHIDSGKT), 183–187 (DTPGH), and 237–240 (NKMD).

The protein belongs to the TRAFAC class translation factor GTPase superfamily. Classic translation factor GTPase family. EF-G/EF-2 subfamily.

It is found in the mitochondrion. It functions in the pathway protein biosynthesis; polypeptide chain elongation. Its function is as follows. Mitochondrial GTPase that catalyzes the GTP-dependent ribosomal translocation step during translation elongation. During this step, the ribosome changes from the pre-translocational (PRE) to the post-translocational (POST) state as the newly formed A-site-bound peptidyl-tRNA and P-site-bound deacylated tRNA move to the P and E sites, respectively. Catalyzes the coordinated movement of the two tRNA molecules, the mRNA and conformational changes in the ribosome. This chain is Elongation factor G, mitochondrial (mef1), found in Sclerotinia sclerotiorum (strain ATCC 18683 / 1980 / Ss-1) (White mold).